We begin with the raw amino-acid sequence, 865 residues long: Protein fluG (865 aa).

The GS beta-grasp domain maps to 442 to 533; the sequence is PGVKYVWTQF…VMTWWKSEQG (92 aa). The 326-residue stretch at 540-865 folds into the GS catalytic domain; the sequence is PRTNLLNINN…ARRKWLVERY (326 aa).

It belongs to the glutamine synthetase family.

It localises to the cytoplasm. May function as a GSI-related enzyme in synthesizing a small diffusible factor that acts as an extracellular signal directing asexual sporulation and perhaps other aspects of colony growth. May be involved in brlA activation (an early transcriptional regulator for conidiation specific gene). This chain is Protein fluG (fluG), found in Emericella nidulans (strain FGSC A4 / ATCC 38163 / CBS 112.46 / NRRL 194 / M139) (Aspergillus nidulans).